The following is a 235-amino-acid chain: H2HPP isomerase (235 aa).

Cupin type-2 domains follow at residues 41-106 and 151-216; these read VPPH…AIDI and KIPG…KSIN. The a divalent metal cation site is built by His-50, His-52, Gln-56, His-91, His-162, His-164, Gln-168, and His-202. A substrate-binding site is contributed by Tyr-223.

In terms of assembly, monomer. The cofactor is Fe(2+). It depends on Co(2+) as a cofactor.

It localises to the cytoplasm. It carries out the reaction 3-[(4R)-4-hydroxycyclohexa-1,5-dien-1-yl]-2-oxopropanoate = 3-[(1E,4R)-4-hydroxycyclohex-2-en-1-ylidene]pyruvate. The protein operates within antibiotic biosynthesis; bacilysin biosynthesis. In terms of biological role, part of the bacABCDEF operon responsible for the biosynthesis of the nonribosomally synthesized dipeptide antibiotic bacilysin, composed of L-alanine and L-anticapsin. Bacilysin is an irreversible inactivator of the glutaminase domain of glucosamine synthetase. BacB catalyzes the allylic isomerization of the endocyclic-delta(4),delta(8)-7R-dihydro-hydroxyphenylpyruvate (en-H2HPP) to generate a mixture of 3E,7R- and 3Z, 7R-olefins (E/Z ration of 3/1) of the exocyclic-delta(3),delta(5)-dihydro-hydroxyphenylpyruvate (ex-H2HPP). This Bacillus subtilis (strain 168) protein is H2HPP isomerase.